A 555-amino-acid chain; its full sequence is NAD-dependent protein deacetylase sirtuin-1 (555 aa).

A Nuclear localization signal motif is present at residues 39–46; the sequence is PPKRKKRK. The Deacetylase sirtuin-type domain occupies 44–304; sequence KRKDINTIED…NELCHRLGGE (261 aa). Lysine 46 is subject to N6-acetyllysine. Positions 64 to 67 are required for interaction with the sumoylated form of CCAR2; that stretch reads IIVL. Residues 69–88 and 153–156 contribute to the NAD(+) site; these read GAGVSVSCGIPDFRSRDGIY and QNID. Histidine 171 acts as the Proton acceptor in catalysis. Cysteine 179 and cysteine 182 together coordinate Zn(2+). Position 185 is an N6-acetyllysine (lysine 185). Zn(2+) contacts are provided by cysteine 203 and cysteine 206. An S-nitrosocysteine mark is found at cysteine 203 and cysteine 206. Lysine 238 carries the post-translational modification N6-acetyllysine. A Nuclear export signal motif is present at residues 241-247; it reads VDLLIVI. NAD(+) is bound by residues 248–250, 273–275, and cysteine 290; these read GSS and NRE. Residue lysine 321 is modified to N6-acetyllysine. The tract at residues 335–354 is disordered; that stretch reads LPPTPLHISEDSSSPERTVP. Phosphothreonine is present on threonine 338. The residue at position 343 (serine 343) is a Phosphoserine. Polar residues predominate over residues 345 to 354; it reads DSSSPERTVP. Threonine 352 carries the post-translational modification Phosphothreonine. Position 417 is an N6-acetyllysine (lysine 417). Phosphoserine is present on residues serine 466 and serine 468. Residues 469–529 are disordered; it reads EDDALSSSSC…GGSGADGGDQ (61 aa). Over residues 473 to 493 the composition is skewed to low complexity; the sequence is LSSSSCGSNSDSGTCQSPSLE. Acidic residues predominate over residues 494 to 514; it reads EPLEDESEIEEFYNGLEDDAD. Serine 552 is modified (phosphoserine).

Belongs to the sirtuin family. Class I subfamily. Interacts with XBP1 isoform 2. Found in a complex with PCAF and MYOD1. Interacts with FOXO1; the interaction deacetylates FOXO1, resulting in its nuclear retention and promotion of its transcriptional activity Component of the eNoSC complex, composed of SIRT1, SUV39H1 and RRP8. Interacts with HES1, HEY2 and PML. Interacts with RPS19BP1/AROS. Interacts with CCAR2 (via N-terminus); the interaction disrupts the interaction between SIRT1 and p53/TP53. Interacts with SETD7; the interaction induces the dissociation of SIRT1 from p53/TP53 and increases p53/TP53 activity. Interacts with MYCN, NR1I2, CREBZF, TSC2, TLE1, FOS, JUN, NR0B2, PPARG, NCOR, IRS1, IRS2 and NMNAT1. Interacts with HNF1A; the interaction occurs under nutrient restriction. Interacts with SUZ12; the interaction mediates the association with the PRC4 histone methylation complex which is specific as an association with PCR2 and PCR3 complex variants is not found. Interacts with HIV-1 tat. Interacts with BCL6; leads to a epigenetic repression of specific target genes. Interacts with CLOCK, BMAL1 and PER2. Interacts with PPARA; the interaction seems to be modulated by NAD(+) levels. Interacts with NR1H3 and this interaction is inhibited in the presence of CCAR2. Interacts with CHEK2. Interacts with p53/TP53. Exhibits a preferential interaction with sumoylated CCAR2 over its unmodified form. Interacts with PACS2. Interacts with SIRT7. Interacts with PUS7. Interacts with TULP3. Interacts with MORN3; the interaction enhances the ubiquitination of p53/TP53. Requires Zn(2+) as cofactor. In terms of processing, methylated on multiple lysine residues; methylation is enhanced after DNA damage and is dispensable for deacetylase activity toward p53/TP53. Phosphorylated. Phosphorylated by STK4/MST1, resulting in inhibition of SIRT1-mediated p53/TP53 deacetylation. Phosphorylation by MAPK8/JNK1 at Thr-338 leads to increased nuclear localization and enzymatic activity. Phosphorylation at Thr-338 by DYRK1A and DYRK3 activates deacetylase activity and promotes cell survival. Phosphorylated by CaMK2, leading to increased p53/TP53 and NF-kappa-B p65/RELA deacetylation activity. Post-translationally, S-nitrosylated by GAPDH, leading to inhibit the NAD-dependent protein deacetylase activity. In terms of processing, acetylated at various Lys residues. Deacetylated via an autocatalytic mechanism. Autodeacetylation at Lys-46 promotes its protein deacetylase activity. Ubiquitinated; leading to degradation. Deubiquitinated by USP22; leading to stabilization.

The protein resides in the nucleus. It is found in the PML body. Its subcellular location is the cytoplasm. It carries out the reaction N(6)-acetyl-L-lysyl-[protein] + NAD(+) + H2O = 2''-O-acetyl-ADP-D-ribose + nicotinamide + L-lysyl-[protein]. The catalysed reaction is N(6)-propanoyl-L-lysyl-[protein] + NAD(+) + H2O = 3''-O-propanoyl-ADP-D-ribose + nicotinamide + L-lysyl-[protein]. It catalyses the reaction N(6)-(2E)-butenoyl-L-lysyl-[protein] + NAD(+) + H2O = 2''-O-(2E)-but-2-enoyl-ADP-D-ribose + nicotinamide + L-lysyl-[protein]. Its activity is regulated as follows. Inhibited by nicotinamide. Activated by resveratrol (3,5,4'-trihydroxy-trans-stilbene), butein (3,4,2',4'-tetrahydroxychalcone), piceatannol (3,5,3',4'-tetrahydroxy-trans-stilbene), Isoliquiritigenin (4,2',4'-trihydroxychalcone), fisetin (3,7,3',4'-tetrahydroxyflavone) and quercetin (3,5,7,3',4'-pentahydroxyflavone). MAPK8/JNK1 and RPS19BP1/AROS act as positive regulators of deacetylation activity. Negatively regulated by CCAR2. Functionally, NAD-dependent protein deacetylase that links transcriptional regulation directly to intracellular energetics and participates in the coordination of several separated cellular functions such as cell cycle, response to DNA damage, metabolism, apoptosis and autophagy. Can modulate chromatin function through deacetylation of histones and can promote alterations in the methylation of histones and DNA, leading to transcriptional repression. Deacetylates a broad range of transcription factors and coregulators, thereby regulating target gene expression positively and negatively. Serves as a sensor of the cytosolic ratio of NAD(+)/NADH which is altered by glucose deprivation and metabolic changes associated with caloric restriction. Is essential in skeletal muscle cell differentiation and in response to low nutrients mediates the inhibitory effect on skeletal myoblast differentiation which also involves 5'-AMP-activated protein kinase (AMPK) and nicotinamide phosphoribosyltransferase (NAMPT). Component of the eNoSC (energy-dependent nucleolar silencing) complex, a complex that mediates silencing of rDNA in response to intracellular energy status and acts by recruiting histone-modifying enzymes. The eNoSC complex is able to sense the energy status of cell: upon glucose starvation, elevation of NAD(+)/NADP(+) ratio activates SIRT1, leading to histone H3 deacetylation followed by dimethylation of H3 at 'Lys-9' (H3K9me2) by SUV39H1 and the formation of silent chromatin in the rDNA locus. Deacetylates 'Lys-266' of SUV39H1, leading to its activation. Inhibits skeletal muscle differentiation by deacetylating PCAF and MYOD1. Deacetylates H2A and 'Lys-26' of H1-4. Deacetylates 'Lys-16' of histone H4 (in vitro). Involved in NR0B2/SHP corepression function through chromatin remodeling: Recruited to LRH1 target gene promoters by NR0B2/SHP thereby stimulating histone H3 and H4 deacetylation leading to transcriptional repression. Proposed to contribute to genomic integrity via positive regulation of telomere length; however, reports on localization to pericentromeric heterochromatin are conflicting. Proposed to play a role in constitutive heterochromatin (CH) formation and/or maintenance through regulation of the available pool of nuclear SUV39H1. Upon oxidative/metabolic stress decreases SUV39H1 degradation by inhibiting SUV39H1 polyubiquitination by MDM2. This increase in SUV39H1 levels enhances SUV39H1 turnover in CH, which in turn seems to accelerate renewal of the heterochromatin which correlates with greater genomic integrity during stress response. Deacetylates 'Lys-382' of p53/TP53 and impairs its ability to induce transcription-dependent proapoptotic program and modulate cell senescence. Deacetylates TAF1B and thereby represses rDNA transcription by the RNA polymerase I. Deacetylates MYC, promotes the association of MYC with MAX and decreases MYC stability leading to compromised transformational capability. Deacetylates FOXO3 in response to oxidative stress thereby increasing its ability to induce cell cycle arrest and resistance to oxidative stress but inhibiting FOXO3-mediated induction of apoptosis transcriptional activity; also leading to FOXO3 ubiquitination and protesomal degradation. Appears to have a similar effect on MLLT7/FOXO4 in regulation of transcriptional activity and apoptosis. Deacetylates DNMT1; thereby impairs DNMT1 methyltransferase-independent transcription repressor activity, modulates DNMT1 cell cycle regulatory function and DNMT1-mediated gene silencing. Deacetylates RELA/NF-kappa-B p65 thereby inhibiting its transactivating potential and augments apoptosis in response to TNF-alpha. Deacetylates HIF1A, KAT5/TIP60, RB1 and HIC1. Deacetylates FOXO1 resulting in its nuclear retention and enhancement of its transcriptional activity leading to increased gluconeogenesis in liver. Inhibits E2F1 transcriptional activity and apoptotic function, possibly by deacetylation. Involved in HES1- and HEY2-mediated transcriptional repression. In cooperation with MYCN seems to be involved in transcriptional repression of DUSP6/MAPK3 leading to MYCN stabilization by phosphorylation at 'Ser-62'. Deacetylates MEF2D. Required for antagonist-mediated transcription suppression of AR-dependent genes which may be linked to local deacetylation of histone H3. Represses HNF1A-mediated transcription. Required for the repression of ESRRG by CREBZF. Deacetylates NR1H3 AND NR1H2 and deacetylation of NR1H3 at 'Lys-434' positively regulates transcription of NR1H3:RXR target genes, promotes NR1H3 proteasomal degradation and results in cholesterol efflux; a promoter clearing mechanism after reach round of transcription is proposed. Involved in lipid metabolism: deacetylates LPIN1, thereby inhibiting diacylglycerol synthesis. Implicated in regulation of adipogenesis and fat mobilization in white adipocytes by repression of PPARG which probably involves association with NCOR1 and SMRT/NCOR2. Deacetylates p300/EP300 and PRMT1. Deacetylates ACSS2 leading to its activation, and HMGCS1 deacetylation. Involved in liver and muscle metabolism. Through deacetylation and activation of PPARGC1A is required to activate fatty acid oxidation in skeletal muscle under low-glucose conditions and is involved in glucose homeostasis. Involved in regulation of PPARA and fatty acid beta-oxidation in liver. Involved in positive regulation of insulin secretion in pancreatic beta cells in response to glucose; the function seems to imply transcriptional repression of UCP2. Proposed to deacetylate IRS2 thereby facilitating its insulin-induced tyrosine phosphorylation. Deacetylates SREBF1 isoform SREBP-1C thereby decreasing its stability and transactivation in lipogenic gene expression. Involved in DNA damage response by repressing genes which are involved in DNA repair, such as XPC and TP73, deacetylating XRCC6/Ku70, and facilitating recruitment of additional factors to sites of damaged DNA, such as SIRT1-deacetylated NBN can recruit ATM to initiate DNA repair and SIRT1-deacetylated XPA interacts with RPA2. Also involved in DNA repair of DNA double-strand breaks by homologous recombination and specifically single-strand annealing independently of XRCC6/Ku70 and NBN. Promotes DNA double-strand breaks by mediating deacetylation of SIRT6. Transcriptional suppression of XPC probably involves an E2F4:RBL2 suppressor complex and protein kinase B (AKT) signaling. Transcriptional suppression of TP73 probably involves E2F4 and PCAF. Deacetylates WRN thereby regulating its helicase and exonuclease activities and regulates WRN nuclear translocation in response to DNA damage. Deacetylates APEX1 at 'Lys-6' and 'Lys-7' and stimulates cellular AP endonuclease activity by promoting the association of APEX1 to XRCC1. Catalyzes deacetylation of ERCC4/XPF, thereby impairing interaction with ERCC1 and nucleotide excision repair (NER). Increases p53/TP53-mediated transcription-independent apoptosis by blocking nuclear translocation of cytoplasmic p53/TP53 and probably redirecting it to mitochondria. Deacetylates XRCC6/Ku70 at 'Lys-539' and 'Lys-542' causing it to sequester BAX away from mitochondria thereby inhibiting stress-induced apoptosis. Is involved in autophagy, presumably by deacetylating ATG5, ATG7 and MAP1LC3B/ATG8. Deacetylates AKT1 which leads to enhanced binding of AKT1 and PDK1 to PIP3 and promotes their activation. Proposed to play role in regulation of STK11/LBK1-dependent AMPK signaling pathways implicated in cellular senescence which seems to involve the regulation of the acetylation status of STK11/LBK1. Can deacetylate STK11/LBK1 and thereby increase its activity, cytoplasmic localization and association with STRAD; however, the relevance of such activity in normal cells is unclear. In endothelial cells is shown to inhibit STK11/LBK1 activity and to promote its degradation. Deacetylates SMAD7 at 'Lys-64' and 'Lys-70' thereby promoting its degradation. Deacetylates CIITA and augments its MHC class II transactivation and contributes to its stability. Deacetylates MECOM/EVI1. Deacetylates PML at 'Lys-487' and this deacetylation promotes PML control of PER2 nuclear localization. During the neurogenic transition, represses selective NOTCH1-target genes through histone deacetylation in a BCL6-dependent manner and leading to neuronal differentiation. Regulates the circadian expression of several core clock genes, including BMAL1, RORC, PER2 and CRY1 and plays a critical role in maintaining a controlled rhythmicity in histone acetylation, thereby contributing to circadian chromatin remodeling. Deacetylates BMAL1 and histones at the circadian gene promoters in order to facilitate repression by inhibitory components of the circadian oscillator. Deacetylates PER2, facilitating its ubiquitination and degradation by the proteasome. Protects cardiomyocytes against palmitate-induced apoptosis. Deacetylates XBP1 isoform 2; deacetylation decreases protein stability of XBP1 isoform 2 and inhibits its transcriptional activity. Deacetylates PCK1 and directs its activity toward phosphoenolpyruvate production promoting gluconeogenesis. Involved in the CCAR2-mediated regulation of PCK1 and NR1D1. Deacetylates CTNB1 at 'Lys-49'. In POMC (pro-opiomelanocortin) neurons, required for leptin-induced activation of PI3K signaling. In addition to protein deacetylase activity, also acts as a protein-lysine deacylase by mediating protein depropionylation and decrotonylation. Mediates depropionylation of Osterix (SP7). Catalyzes decrotonylation of histones; it however does not represent a major histone decrotonylase. Deacetylates SOX9; promoting SOX9 nuclear localization and transactivation activity. Involved in the regulation of centrosome duplication. Deacetylates CENATAC in G1 phase, allowing for SASS6 accumulation on the centrosome and subsequent procentriole assembly. Deacetylates NDC80/HEC1. The polypeptide is NAD-dependent protein deacetylase sirtuin-1 (Rattus norvegicus (Rat)).